Consider the following 675-residue polypeptide: Methionine--tRNA ligase (675 aa).

Positions 15–25 match the 'HIGH' region motif; sequence PYANGSIHLGH. Residues C146, C149, C159, and C162 each contribute to the Zn(2+) site. The short motif at 332-336 is the 'KMSKS' region element; the sequence is KMSKS. K335 contacts ATP. A tRNA-binding domain is found at 574–675; it reads DFAKLDLRIA…AGAKPGMRVK (102 aa).

It belongs to the class-I aminoacyl-tRNA synthetase family. MetG type 1 subfamily. In terms of assembly, homodimer. Zn(2+) is required as a cofactor.

It is found in the cytoplasm. It carries out the reaction tRNA(Met) + L-methionine + ATP = L-methionyl-tRNA(Met) + AMP + diphosphate. Functionally, is required not only for elongation of protein synthesis but also for the initiation of all mRNA translation through initiator tRNA(fMet) aminoacylation. This is Methionine--tRNA ligase from Tolumonas auensis (strain DSM 9187 / NBRC 110442 / TA 4).